Here is a 165-residue protein sequence, read N- to C-terminus: DNA mimic protein DMP19 (165 aa).

It belongs to the DMP19-like protein family. Monomer. Homodimer. The monomeric form of DMP19 interacts with the DNA-binding protein HU homodimer with 1:1 stoichiometry. The dimeric form of DMP19 interacts with the Neisseria hypothetical transcription factor (NHTF) dimer.

Activity can be modulated in vitro by crown ethers, which are small cyclic polyethers that can modify protein surface behavior dramatically by stabilizing either intra- or intermolecular interactions, thereby probably altering the protein's tertiary and quaternary structure. Its function is as follows. Acts as a DNA mimic. Interacts with DNA-binding proteins and prevents their binding to DNA by occupying the DNA binding sites on the proteins, acting as a competitive inhibitor. DMP19 is a bifunctional DNA mimic protein involved in controlling nucleoid formation as well as gene regulation. This bifunctionality depends on different oligomeric states. The monomeric form interacts with the DNA-binding protein HU, which prevents HU from binding to DNA and forming nucleoids. The dimeric form interacts with the Neisseria hypothetical transcription factor (NHTF) and prevents NHTF from binding to its DNA-binding sites, thereby blocking its repressor activity and influencing expression of the target genes. DMP19 might use these different oligomerizations to regulate genes in two steps: the monomeric form may first release selected gene regions in chromosomal DNA by preventing HU from binding to DNA and forming nucleoids, then the dimeric form blocks the gene repressor activity of NHTF and ensures the continued expression of NHTF-controlled genes. The polypeptide is DNA mimic protein DMP19 (Neisseria meningitidis serogroup B (strain ATCC BAA-335 / MC58)).